The following is a 101-amino-acid chain: Urease subunit beta (101 aa).

This sequence belongs to the urease beta subunit family. Heterotrimer of UreA (gamma), UreB (beta) and UreC (alpha) subunits. Three heterotrimers associate to form the active enzyme.

It localises to the cytoplasm. The catalysed reaction is urea + 2 H2O + H(+) = hydrogencarbonate + 2 NH4(+). Its pathway is nitrogen metabolism; urea degradation; CO(2) and NH(3) from urea (urease route): step 1/1. The protein is Urease subunit beta of Rhizobium rhizogenes (strain K84 / ATCC BAA-868) (Agrobacterium radiobacter).